Here is a 179-residue protein sequence, read N- to C-terminus: RNA polymerase sigma-E factor (179 aa).

Residues 36–49 (DLLQTALVRTYGRW) carry the Polymerase core binding motif. The H-T-H motif DNA-binding region spans 130 to 149 (TEETAAALGMSAGTVKSTLH).

Belongs to the sigma-70 factor family. ECF subfamily.

Its subcellular location is the cytoplasm. Sigma factors are initiation factors that promote the attachment of RNA polymerase to specific initiation sites and are then released. This sigma factor is required for normal cell wall integrity; it is recruited by RNA polymerase to transcribe genes with cell wall-related functions. The chain is RNA polymerase sigma-E factor (sigE) from Streptomyces avermitilis (strain ATCC 31267 / DSM 46492 / JCM 5070 / NBRC 14893 / NCIMB 12804 / NRRL 8165 / MA-4680).